We begin with the raw amino-acid sequence, 586 residues long: Arginine--tRNA ligase (586 aa).

The 'HIGH' region signature appears at 130-140 (ANPTGPMHVGH).

It belongs to the class-I aminoacyl-tRNA synthetase family. In terms of assembly, monomer.

It is found in the cytoplasm. The catalysed reaction is tRNA(Arg) + L-arginine + ATP = L-arginyl-tRNA(Arg) + AMP + diphosphate. The polypeptide is Arginine--tRNA ligase (Methylobacterium sp. (strain 4-46)).